The chain runs to 921 residues: Protein translocase subunit SecA (921 aa).

Residues Gln87, 105 to 109 (GEGKT), and Asp515 each bind ATP. Positions 575 to 594 (RRIDNQLRGRSGRQGDPGSS) are disordered. The Zn(2+) site is built by Cys905, Cys907, Cys916, and Cys917.

It belongs to the SecA family. As to quaternary structure, monomer and homodimer. Part of the essential Sec protein translocation apparatus which comprises SecA, SecYEG and auxiliary proteins SecDF-YajC and YidC. Requires Zn(2+) as cofactor.

It localises to the cell inner membrane. The protein localises to the cytoplasm. It catalyses the reaction ATP + H2O + cellular proteinSide 1 = ADP + phosphate + cellular proteinSide 2.. Functionally, part of the Sec protein translocase complex. Interacts with the SecYEG preprotein conducting channel. Has a central role in coupling the hydrolysis of ATP to the transfer of proteins into and across the cell membrane, serving both as a receptor for the preprotein-SecB complex and as an ATP-driven molecular motor driving the stepwise translocation of polypeptide chains across the membrane. The sequence is that of Protein translocase subunit SecA from Polynucleobacter necessarius subsp. necessarius (strain STIR1).